A 250-amino-acid polypeptide reads, in one-letter code: NAD(P)H-quinone oxidoreductase subunit K, chloroplastic (250 aa).

The [4Fe-4S] cluster site is built by Cys67, Cys68, Cys132, and Cys163.

The protein belongs to the complex I 20 kDa subunit family. In terms of assembly, NDH is composed of at least 16 different subunits, 5 of which are encoded in the nucleus. The cofactor is [4Fe-4S] cluster.

It localises to the plastid. It is found in the chloroplast thylakoid membrane. The enzyme catalyses a plastoquinone + NADH + (n+1) H(+)(in) = a plastoquinol + NAD(+) + n H(+)(out). It catalyses the reaction a plastoquinone + NADPH + (n+1) H(+)(in) = a plastoquinol + NADP(+) + n H(+)(out). Functionally, NDH shuttles electrons from NAD(P)H:plastoquinone, via FMN and iron-sulfur (Fe-S) centers, to quinones in the photosynthetic chain and possibly in a chloroplast respiratory chain. The immediate electron acceptor for the enzyme in this species is believed to be plastoquinone. Couples the redox reaction to proton translocation, and thus conserves the redox energy in a proton gradient. The polypeptide is NAD(P)H-quinone oxidoreductase subunit K, chloroplastic (Adiantum capillus-veneris (Maidenhair fern)).